The following is a 264-amino-acid chain: Proliferating cell nuclear antigen (264 aa).

Residues 61-80 (RCDRNLAMGINMTSMAKIMK) mediate DNA binding.

This sequence belongs to the PCNA family. In terms of assembly, homotrimer. Forms a complex with activator 1 heteropentamer in the presence of ATP.

Its subcellular location is the nucleus. Functionally, this protein is an auxiliary protein of DNA polymerase delta and is involved in the control of eukaryotic DNA replication by increasing the polymerase's processibility during elongation of the leading strand. In Styela clava (Sea squirt), this protein is Proliferating cell nuclear antigen (PCNA).